Here is a 162-residue protein sequence, read N- to C-terminus: Small ribosomal subunit protein bS16 (162 aa).

Residues alanine 113 to serine 162 are disordered. Positions proline 124 to alanine 134 are enriched in basic residues.

Belongs to the bacterial ribosomal protein bS16 family.

The chain is Small ribosomal subunit protein bS16 from Mycobacterium tuberculosis (strain ATCC 25177 / H37Ra).